A 457-amino-acid polypeptide reads, in one-letter code: 3-ketoacyl-CoA thiolase 5, peroxisomal (457 aa).

Residues 1-37 constitute a peroxisome transit peptide; it reads MERAMERQKILLRHLNPVSSSNSSLKHEPSLLSPVNC. Catalysis depends on cysteine 137, which acts as the Acyl-thioester intermediate. Active-site proton acceptor residues include histidine 394 and cysteine 426.

It belongs to the thiolase-like superfamily. Thiolase family. Homodimer. Expressed in seedlings and wounded leaves.

It localises to the peroxisome. It carries out the reaction an acyl-CoA + acetyl-CoA = a 3-oxoacyl-CoA + CoA. It functions in the pathway lipid metabolism; fatty acid metabolism. In terms of biological role, probably involved in long chain fatty-acid beta-oxidation prior to gluconeogenesis during germination and subsequent seedling growth. Involved in systemic jasmonic acid (JA) biosynthesis after wounding and may be during senescence. The protein is 3-ketoacyl-CoA thiolase 5, peroxisomal (KAT5) of Arabidopsis thaliana (Mouse-ear cress).